The following is a 537-amino-acid chain: Extracellular exo-inulinase inuE (537 aa).

Positions 1–19 (MARLLKAVTVCALAGIAHA) are cleaved as a signal peptide. The active site involves D41. N-linked (GlcNAc...) asparagine glycans are attached at residues N49, N67, N112, N300, N363, N398, N430, and N531.

This sequence belongs to the glycosyl hydrolase 32 family.

The protein localises to the secreted. The catalysed reaction is Hydrolysis of terminal, non-reducing (2-&gt;1)- and (2-&gt;6)-linked beta-D-fructofuranose residues in fructans.. Functionally, exo-inulinase involved in utilization of the plant storage polymer inulin, consisting of fructooligosaccharides with a degree of polymerization (DP) value from 2 to 60. Splits off terminal fructose units successively from the non-reducing end of the inulin molecule, and also hydrolyze sucrose and raffinose. In Aspergillus niger (strain ATCC MYA-4892 / CBS 513.88 / FGSC A1513), this protein is Extracellular exo-inulinase inuE (inuE).